The following is an 875-amino-acid chain: Protein HIR2 (875 aa).

WD repeat units follow at residues I10–F47, K118–E158, K163–L201, P237–Y277, E278–N316, and V320–A359. Residues E398–K473 are disordered. Positions A424–Y446 are enriched in polar residues. 2 WD repeats span residues L546–P587 and V589–P626. Phosphoserine is present on S713.

It belongs to the WD repeat HIR1 family. As to quaternary structure, component of the HIR complex, composed of HIR1, HIR2, HIR3 and HPC2. This complex may consist of one copy of HIR1 and HIR3 and two copies of HIR2 and HPC2. The HIR complex interacts with ASF1. Interacts with SNF2. Interacts with SNF5. Interacts with SWI3. Interacts with RTT106.

The protein localises to the nucleus. Its subcellular location is the chromosome. Its function is as follows. Component of the HIR complex, which cooperates with ASF1 to promote replication-independent chromatin assembly. The HIR complex is also required for the periodic repression of three of the four histone gene loci during the cell cycle as well as for autogenous regulation of the HTA1-HTB1 locus by H2A and H2B. DNA-binding by the HIR complex may repress transcription by inhibiting nucleosome remodeling by the SWI/SNF complex. The HIR complex may also be required for transcriptional silencing of centromeric, telomeric and mating-type loci in the absence of CAF-1. In Saccharomyces cerevisiae (strain ATCC 204508 / S288c) (Baker's yeast), this protein is Protein HIR2 (HIR2).